Consider the following 306-residue polypeptide: Ethylmalonyl-CoA decarboxylase (306 aa).

The residue at position 216 (Lys216) is an N6-acetyllysine; alternate. Lys216 is subject to N6-succinyllysine; alternate.

The protein belongs to the enoyl-CoA hydratase/isomerase family.

It localises to the cytoplasm. The protein localises to the cytosol. The catalysed reaction is (2S)-ethylmalonyl-CoA + H(+) = butanoyl-CoA + CO2. It catalyses the reaction (S)-methylmalonyl-CoA + H(+) = propanoyl-CoA + CO2. It carries out the reaction (2R)-ethylmalonyl-CoA + H(+) = butanoyl-CoA + CO2. Functionally, decarboxylates ethylmalonyl-CoA, a potentially toxic metabolite, to form butyryl-CoA, suggesting it might be involved in metabolite proofreading. Acts preferentially on (S)-ethylmalonyl-CoA but also has some activity on the (R)-isomer. Also has methylmalonyl-CoA decarboxylase activity at lower level. This chain is Ethylmalonyl-CoA decarboxylase (ECHDC1), found in Bos taurus (Bovine).